Reading from the N-terminus, the 320-residue chain is L-lactate dehydrogenase A (320 aa).

3 residues coordinate substrate: R88, N120, and R151. N120 contacts NAD(+). The active-site Proton acceptor is H175.

This sequence belongs to the LDH/MDH superfamily. LDH family. In terms of assembly, homotetramer.

It is found in the cytoplasm. It carries out the reaction (S)-lactate + NAD(+) = pyruvate + NADH + H(+). It participates in fermentation; pyruvate fermentation to lactate; (S)-lactate from pyruvate: step 1/1. In terms of biological role, converts pyruvate to lactate. The polypeptide is L-lactate dehydrogenase A (LDHA) (Rhizopus oryzae (Mucormycosis agent)).